The sequence spans 637 residues: Biosynthetic arginine decarboxylase (637 aa).

Lysine 107 is modified (N6-(pyridoxal phosphate)lysine). 289-299 (LDVGGGLGVDY) is a binding site for substrate.

The protein belongs to the Orn/Lys/Arg decarboxylase class-II family. SpeA subfamily. Mg(2+) serves as cofactor. Pyridoxal 5'-phosphate is required as a cofactor.

The catalysed reaction is L-arginine + H(+) = agmatine + CO2. In terms of biological role, catalyzes the biosynthesis of agmatine from arginine. In Thermosynechococcus vestitus (strain NIES-2133 / IAM M-273 / BP-1), this protein is Biosynthetic arginine decarboxylase.